Reading from the N-terminus, the 357-residue chain is Fructose-1,6-bisphosphatase class 1 2 (357 aa).

The Mg(2+) site is built by glutamate 90, aspartate 112, leucine 114, and aspartate 115. Residues 115-118 (DGSS) and asparagine 206 contribute to the substrate site. Glutamate 278 contributes to the Mg(2+) binding site.

Belongs to the FBPase class 1 family. In terms of assembly, homotetramer. It depends on Mg(2+) as a cofactor.

Its subcellular location is the cytoplasm. The catalysed reaction is beta-D-fructose 1,6-bisphosphate + H2O = beta-D-fructose 6-phosphate + phosphate. It participates in carbohydrate biosynthesis; gluconeogenesis. This Dechloromonas aromatica (strain RCB) protein is Fructose-1,6-bisphosphatase class 1 2.